A 1129-amino-acid polypeptide reads, in one-letter code: Tyrosine-protein kinase JAK2 (1129 aa).

In terms of domain architecture, FERM spans 35–378 (PLLQVYLYYS…GYYRLTADAH (344 aa)). At Y117 the chain carries Phosphotyrosine; by autocatalysis. The region spanning 399-480 (HGPIFMDFAI…NLKDLLTCYQ (82 aa)) is the SH2; atypical domain. Protein kinase domains are found at residues 542–806 (LIFE…NSLF) and 846–1118 (LKFL…DLAQ). Position 852–860 (852–860 (LGKGNFGSV)) interacts with ATP. The residue at position 865 (Y865) is a Phosphotyrosine; by autocatalysis. Residue K879 coordinates ATP. Phosphotyrosine; by autocatalysis is present on residues Y963 and Y969. The active-site Proton acceptor is D973. Residues Y1004 and Y1005 each carry the phosphotyrosine; by autocatalysis modification.

Belongs to the protein kinase superfamily. Tyr protein kinase family. JAK subfamily. In terms of processing, autophosphorylated, leading to regulate its activity.

It is found in the endomembrane system. The protein localises to the nucleus. The catalysed reaction is L-tyrosyl-[protein] + ATP = O-phospho-L-tyrosyl-[protein] + ADP + H(+). With respect to regulation, regulated by autophosphorylation, can both activate or decrease activity. Heme regulates its activity by enhancing the phosphorylation on Tyr-1004 and Tyr-1005. Its function is as follows. Non-receptor tyrosine kinase involved in various processes such as cell growth, development, differentiation or histone modifications. Mediates essential signaling events in both innate and adaptive immunity. In the cytoplasm, plays a pivotal role in signal transduction via its association with cytokine receptors. Following ligand-binding to cell surface receptors, phosphorylates specific tyrosine residues on the cytoplasmic tails of the receptor, creating docking sites for STATs proteins. Subsequently, phosphorylates the STATs proteins once they are recruited to the receptor. Phosphorylated STATs then form homodimer or heterodimers and translocate to the nucleus to activate gene transcription. For example, cell stimulation with erythropoietin (EPO) during erythropoiesis leads to JAK2 autophosphorylation, activation, and its association with erythropoietin receptor (EPOR) that becomes phosphorylated in its cytoplasmic domain. Then, STAT5 (STAT5A or STAT5B) is recruited, phosphorylated and activated by JAK2. Once activated, dimerized STAT5 translocates into the nucleus and promotes the transcription of several essential genes involved in the modulation of erythropoiesis. Part of a signaling cascade that is activated by increased cellular retinol and that leads to the activation of STAT5 (STAT5A or STAT5B). In the nucleus, plays a key role in chromatin by specifically mediating phosphorylation of 'Tyr-41' of histone H3 (H3Y41ph), a specific tag that promotes exclusion of CBX5 (HP1 alpha) from chromatin. Up-regulates the potassium voltage-gated channel activity of KCNA3. The polypeptide is Tyrosine-protein kinase JAK2 (Gallus gallus (Chicken)).